A 118-amino-acid polypeptide reads, in one-letter code: uncharacterized protein (118 aa).

Residues 21–38 (IVYFFFFFGLETFFSIIN) traverse the membrane as a helical segment.

The protein localises to the membrane. This is an uncharacterized protein from Dictyostelium discoideum (Social amoeba).